A 211-amino-acid chain; its full sequence is Imidazole glycerol phosphate synthase subunit HisH (211 aa).

Residues 5–211 (SVALLDYGSG…QLLRNWVDSL (207 aa)) form the Glutamine amidotransferase type-1 domain. Cys83 (nucleophile) is an active-site residue. Catalysis depends on residues His192 and Glu194.

Heterodimer of HisH and HisF.

It localises to the cytoplasm. The enzyme catalyses 5-[(5-phospho-1-deoxy-D-ribulos-1-ylimino)methylamino]-1-(5-phospho-beta-D-ribosyl)imidazole-4-carboxamide + L-glutamine = D-erythro-1-(imidazol-4-yl)glycerol 3-phosphate + 5-amino-1-(5-phospho-beta-D-ribosyl)imidazole-4-carboxamide + L-glutamate + H(+). The catalysed reaction is L-glutamine + H2O = L-glutamate + NH4(+). Its pathway is amino-acid biosynthesis; L-histidine biosynthesis; L-histidine from 5-phospho-alpha-D-ribose 1-diphosphate: step 5/9. IGPS catalyzes the conversion of PRFAR and glutamine to IGP, AICAR and glutamate. The HisH subunit catalyzes the hydrolysis of glutamine to glutamate and ammonia as part of the synthesis of IGP and AICAR. The resulting ammonia molecule is channeled to the active site of HisF. This Nocardia farcinica (strain IFM 10152) protein is Imidazole glycerol phosphate synthase subunit HisH.